The chain runs to 211 residues: Bcl-2-related ovarian killer protein homolog B (211 aa).

The short motif at 32 to 44 is the BH4 element; sequence KELCRDFIHSRIT. A BH3 motif is present at residues 67–83; that stretch reads VSVVLLKLGDELECMRP. The BH1 motif lies at 113 to 132; the sequence is EVIAMGITWGKVVAIYAVAA. The BH2 signature appears at 165-179; it reads WLKKRGGWVDILKCV. A helical membrane pass occupies residues 190–210; sequence WLSTAVLTWREFIKTMYVYLT.

The protein belongs to the Bcl-2 family. As to expression, expressed strongly in ovary and more weakly in eye. Little expression in other tissues examined.

Its subcellular location is the membrane. In terms of biological role, may play a role in apoptosis. Does not appear to show pro-apoptotic activity when expressed ectopically in early embryos. This is Bcl-2-related ovarian killer protein homolog B (bokb) from Danio rerio (Zebrafish).